A 337-amino-acid polypeptide reads, in one-letter code: Casein kinase I isoform alpha (337 aa).

The Protein kinase domain occupies Y20–F288. ATP is bound by residues I26 to I34 and K49. D139 acts as the Proton acceptor in catalysis.

It belongs to the protein kinase superfamily. CK1 Ser/Thr protein kinase family. Casein kinase I subfamily. In terms of assembly, interacts with cos. The cofactor is Mg(2+). In terms of processing, phosphorylated. The dephosphorylated kinase is active in the cytoplasm while the active kinase in the nucleus is phosphorylated.

Its subcellular location is the cytoplasm. The protein localises to the nucleus. The catalysed reaction is L-seryl-[protein] + ATP = O-phospho-L-seryl-[protein] + ADP + H(+). It carries out the reaction L-threonyl-[protein] + ATP = O-phospho-L-threonyl-[protein] + ADP + H(+). Its activity is regulated as follows. Activity increases following DNA damage. Functionally, casein kinases are operationally defined by their preferential utilization of acidic proteins such as caseins as substrates. Can phosphorylate a large number of proteins. Negative regulator of wg signaling. Phosphorylates arm directly or indirectly and stimulates its degradation which prevents inappropriate wg signaling. Phosphorylates smo which promotes its accumulation at the cell surface and its signaling activity in response to hh. Together with dco, regulates proteolytic processing of ci by phosphorylating it, which promotes its binding to slmb, the F-box recognition component of the SCF(slmb) E3 ubiquitin-protein ligase required for ci processing. Inhibits condensin II interphase activity by promoting degradation of the Cap-H2 regulatory subunit and limiting the levels of chromatin-bound Cap-H2 which regulates interphase chromosome organization. This is Casein kinase I isoform alpha (CkIalpha) from Drosophila melanogaster (Fruit fly).